Consider the following 415-residue polypeptide: WD repeat and FYVE domain-containing protein 2 (415 aa).

4 WD repeats span residues 71–103, 119–148, 202–232, and 245–284; these read HHFMPVAPTSLYYSEETYKLLVGLINGNVYEFS, CHAGPISGLGFALSSELIFSCSRDKSIVWH, AHTNAITSLTWDGNKKVLYSGSSDHLIIMWD, and GHNGKVTTLCAAPAAKRLFSADEHGKLMCWDMNCKRVETP. An FYVE-type zinc finger spans residues 286–357; it reads WKTSDCCQKC…ICNDCNARMK (72 aa). Positions 292, 295, 319, 322, 327, 330, 349, and 352 each coordinate Zn(2+). One copy of the WD 5 repeat lies at 373–403; that stretch reads EIHTGITAMHLQETLGLLVTSGQNRVIMIWD.

Plays a role in coelomocyte endocytosis. The polypeptide is WD repeat and FYVE domain-containing protein 2 (wdfy-2) (Caenorhabditis elegans).